A 908-amino-acid chain; its full sequence is Protein translocase subunit SecA (908 aa).

ATP is bound by residues glutamine 87, 105-109 (GEGKT), and aspartate 511. Residues 559 to 570 (ERHESRRIDNQL) are compositionally biased toward basic and acidic residues. Disordered regions lie at residues 559-582 (ERHE…DPGS) and 841-908 (RRRR…GRLE). Over residues 847 to 856 (LAQQMQRAQA) the composition is skewed to low complexity. Residues 862-873 (TEEDSDAEEQAE) are compositionally biased toward acidic residues. Positions 892, 894, 903, and 904 each coordinate Zn(2+). The segment covering 898-908 (KKYKQCHGRLE) has biased composition (basic residues).

It belongs to the SecA family. In terms of assembly, monomer and homodimer. Part of the essential Sec protein translocation apparatus which comprises SecA, SecYEG and auxiliary proteins SecDF-YajC and YidC. It depends on Zn(2+) as a cofactor.

It localises to the cell inner membrane. It is found in the cytoplasm. It catalyses the reaction ATP + H2O + cellular proteinSide 1 = ADP + phosphate + cellular proteinSide 2.. Part of the Sec protein translocase complex. Interacts with the SecYEG preprotein conducting channel. Has a central role in coupling the hydrolysis of ATP to the transfer of proteins into and across the cell membrane, serving both as a receptor for the preprotein-SecB complex and as an ATP-driven molecular motor driving the stepwise translocation of polypeptide chains across the membrane. In Hahella chejuensis (strain KCTC 2396), this protein is Protein translocase subunit SecA.